A 275-amino-acid chain; its full sequence is 4-hydroxy-tetrahydrodipicolinate reductase (275 aa).

NAD(+) is bound by residues 13–18 and 108–110; these read GAAGKM and GTT. Residue His164 is the Proton donor/acceptor of the active site. His165 contributes to the (S)-2,3,4,5-tetrahydrodipicolinate binding site. Catalysis depends on Lys168, which acts as the Proton donor. Position 174 to 175 (174 to 175) interacts with (S)-2,3,4,5-tetrahydrodipicolinate; it reads GT.

The protein belongs to the DapB family.

Its subcellular location is the cytoplasm. The enzyme catalyses (S)-2,3,4,5-tetrahydrodipicolinate + NAD(+) + H2O = (2S,4S)-4-hydroxy-2,3,4,5-tetrahydrodipicolinate + NADH + H(+). The catalysed reaction is (S)-2,3,4,5-tetrahydrodipicolinate + NADP(+) + H2O = (2S,4S)-4-hydroxy-2,3,4,5-tetrahydrodipicolinate + NADPH + H(+). It participates in amino-acid biosynthesis; L-lysine biosynthesis via DAP pathway; (S)-tetrahydrodipicolinate from L-aspartate: step 4/4. Catalyzes the conversion of 4-hydroxy-tetrahydrodipicolinate (HTPA) to tetrahydrodipicolinate. In Acaryochloris marina (strain MBIC 11017), this protein is 4-hydroxy-tetrahydrodipicolinate reductase.